The sequence spans 365 residues: tRNA 2-selenouridine synthase (365 aa).

The Rhodanese domain occupies 12 to 136; sequence FLDDVPMMDM…LRTFLLDTTQ (125 aa). Cysteine 95 acts as the S-selanylcysteine intermediate in catalysis.

It belongs to the SelU family. In terms of assembly, monomer.

It catalyses the reaction 5-methylaminomethyl-2-thiouridine(34) in tRNA + selenophosphate + (2E)-geranyl diphosphate + H2O + H(+) = 5-methylaminomethyl-2-selenouridine(34) in tRNA + (2E)-thiogeraniol + phosphate + diphosphate. It carries out the reaction 5-methylaminomethyl-2-thiouridine(34) in tRNA + (2E)-geranyl diphosphate = 5-methylaminomethyl-S-(2E)-geranyl-thiouridine(34) in tRNA + diphosphate. The enzyme catalyses 5-methylaminomethyl-S-(2E)-geranyl-thiouridine(34) in tRNA + selenophosphate + H(+) = 5-methylaminomethyl-2-(Se-phospho)selenouridine(34) in tRNA + (2E)-thiogeraniol. The catalysed reaction is 5-methylaminomethyl-2-(Se-phospho)selenouridine(34) in tRNA + H2O = 5-methylaminomethyl-2-selenouridine(34) in tRNA + phosphate. Its function is as follows. Involved in the post-transcriptional modification of the uridine at the wobble position (U34) of tRNA(Lys), tRNA(Glu) and tRNA(Gln). Catalyzes the conversion of 2-thiouridine (S2U-RNA) to 2-selenouridine (Se2U-RNA). Acts in a two-step process involving geranylation of 2-thiouridine (S2U) to S-geranyl-2-thiouridine (geS2U) and subsequent selenation of the latter derivative to 2-selenouridine (Se2U) in the tRNA chain. The chain is tRNA 2-selenouridine synthase from Pseudomonas putida (strain W619).